The primary structure comprises 244 residues: Proteasome subunit alpha type-5 (244 aa).

It belongs to the peptidase T1A family. As to quaternary structure, the 26S proteasome consists of a 20S proteasome core and two 19S regulatory subunits. The 20S proteasome core is composed of 28 subunits that are arranged in four stacked rings, resulting in a barrel-shaped structure. The two end rings are each formed by seven alpha subunits, and the two central rings are each formed by seven beta subunits. The catalytic chamber with the active sites is on the inside of the barrel.

Its subcellular location is the cytoplasm. The protein resides in the nucleus. Its function is as follows. The proteasome is a multicatalytic proteinase complex which is characterized by its ability to cleave peptides with Arg, Phe, Tyr, Leu, and Glu adjacent to the leaving group at neutral or slightly basic pH. The proteasome has an ATP-dependent proteolytic activity. The sequence is that of Proteasome subunit alpha type-5 (Prosalpha5) from Drosophila melanogaster (Fruit fly).